The sequence spans 274 residues: 16S rRNA (guanine(1405)-N(7))-methyltransferase (274 aa).

S-adenosyl-L-methionine contacts are provided by residues phenylalanine 64, 102–104, arginine 108, alanine 133, aspartate 156, 182–183, leucine 198, and glutamine 207; these read HVS and DL.

It belongs to the methyltransferase superfamily. Aminoglycoside resistance family.

It carries out the reaction guanosine(1405) in 16S rRNA + S-adenosyl-L-methionine = N(7)-methylguanosine(1405) in 16S rRNA + S-adenosyl-L-homocysteine. Specifically methylates the N(7) position of guanine 1405 in 16S rRNA. Confers resistance to various aminoglycosides, including gentamicin and kanamycin. The sequence is that of 16S rRNA (guanine(1405)-N(7))-methyltransferase (grm) from Micromonospora echinospora (Micromonospora purpurea).